A 634-amino-acid chain; its full sequence is MQHSSMKVDLSNFFKDERRNSLVFIDAAWNNIKDLQDHIQNLFSLKDISLLTSDGCYLPPRESIKVLNSAEGLKAFRFASHDSDTFVSPAPVKSSKKRKNRSVEEQVHLTASTPLRPSKRSKNQNNSEWINIAENPSRVRKKELLDMAPGPSVQSKLLTNKGTPKAPETQTEVSNMSANIETENKESAPQIKNKSKNKKPTKSPEASDQVENEPAPKSISRCTLKEGKMSESKNQETSPDILSEKSGVVTKENETREEQQDKTHLESNKIPDKLSQLKAGDQIEKSPGIAASLLSISFRSPLLEMPFNVPRIFQFPTKKQQIEILEYKKLKPISPRFLLQKGAKSDDTAKQFPSNGKDSTLKPKSYEILHDEELPDVKDKKNVSEGIKRAVAPLCEDIIETSTTLPGAIGAVESAYLDNSTEAETTLPSEAEATNPLELTESFLQNNTSMEKTPKVEKILPDDGSASPIKNNVDSKDVKTVTVPIFEEQLVSDSDDDVMLVDDSNIDVSYGDSDIEPIPVVENRQSLDIIRDLLRTATPLNSLPSRGDTVIFKLLKIKGNANSGTTEFVAGRCTYVNRRTKIVTVETITYPPEIGRMLRQYYMSGLDESSEDVRTLSIHLKDMLEAKIIVATID.

Disordered regions lie at residues 87–135, 149–276, and 342–361; these read VSPA…IAEN, PGPS…KLSQ, and GAKS…DSTL. Residues 152 to 181 show a composition bias toward polar residues; sequence SVQSKLLTNKGTPKAPETQTEVSNMSANIE. 2 stretches are compositionally biased toward basic and acidic residues: residues 223 to 234 and 251 to 272; these read TLKEGKMSESKN and KENE…KIPD.

Belongs to the coilin family. In egg chambers expressed in the follicle cells, nurse cells and oocyte. Expressed in the larval brain, salivary glands, fat bodies and in the somatic hub cells at the tip of the testis. Expressed in the spermatogonia and spermatocytes, and in the adult ejaculatory duct (at protein level). Expressed in the adult Malpighian tubules.

It localises to the nucleus. The protein localises to the nucleoplasm. The protein resides in the cajal body. Its subcellular location is the chromosome. It is found in the centromere. It localises to the cytoplasm. The protein localises to the cytoskeleton. The protein resides in the spindle. Functionally, component of nuclear coiled bodies, also known as Cajal bodies or CBs, which are involved in the modification and assembly of nucleoplasmic snRNPs. Required for Cajal body formation. This is Coilin from Drosophila melanogaster (Fruit fly).